Reading from the N-terminus, the 684-residue chain is Pentatricopeptide repeat-containing protein At4g14850 (684 aa).

PPR repeat units lie at residues 5–39 (SADA…LDSP), 41–71 (PPFL…TPAR), 72–106 (NVVS…GVVP), 107–141 (NDFT…GRIL), 142–172 (DVFV…IPER), 173–207 (NLET…DGHP), 208–242 (NSIT…GFDT), 243–277 (DVSV…NAVS), 278–308 (WCSL…IVET), 309–343 (SDFM…CVER), 344–374 (TIFV…MPEK), 375–409 (NLVT…GCGP), 412–442 (NYMT…MRST), and 448–478 (GAEH…MPIQ). The interval 483 to 558 (VWGALQNACR…GAGYSWITVK (76 aa)) is type E motif; degenerate. The interval 559-589 (NQVHAFQAKDRSHILNKEIQTTLAKLRNEME) is type E(+) motif; degenerate. The segment at 590–684 (AAGYKPDLKL…DGICSCKDYW (95 aa)) is type DYW motif.

It belongs to the PPR family. PCMP-H subfamily.

Acts as a regulatory factor of isoprenoid biosynthesis. Could bind RNA. This chain is Pentatricopeptide repeat-containing protein At4g14850 (LOI1), found in Arabidopsis thaliana (Mouse-ear cress).